A 156-amino-acid chain; its full sequence is Large ribosomal subunit protein uL15 (156 aa).

Residues Arg25–Val48 form a disordered region. Over residues Thr34–Lys43 the composition is skewed to basic residues.

It belongs to the universal ribosomal protein uL15 family. Part of the 50S ribosomal subunit.

In terms of biological role, binds to the 23S rRNA. This chain is Large ribosomal subunit protein uL15, found in Wolbachia pipientis subsp. Culex pipiens (strain wPip).